Reading from the N-terminus, the 667-residue chain is Protein OS-9 (667 aa).

An N-terminal signal peptide occupies residues 1–25 (MAAETLLSSLLGLLLLGLLLPASLT). One can recognise an MRH domain in the interval 108 to 230 (APCLLKTKDW…TIRTPRLCPH (123 aa)). An intrachain disulfide couples cysteine 110 to cysteine 123. Residues tryptophan 117, tryptophan 118, and glutamine 130 each contribute to the a mannooligosaccharide derivative site. N-linked (GlcNAc...) asparagine glycosylation occurs at asparagine 177. Intrachain disulfides connect cysteine 181–cysteine 216 and cysteine 196–cysteine 228. Residues aspartate 182, arginine 188, glutamate 212, and tyrosine 218 each coordinate a mannooligosaccharide derivative. Disordered regions lie at residues 284–355 (WSET…NNVQ), 372–452 (LKGG…RDRL), 464–483 (LENIIQETEKELDPDGLKKE), 504–540 (LEEKQSPELVKKHKKKRVVPKKPPPSPQPTEEDPEHR), and 633–667 (AQKERQRQKELESNYRRVWGSPGGEGTGDLDEFDF). 2 stretches are compositionally biased toward basic and acidic residues: residues 302–311 (TKDDSKDSDF) and 396–412 (PQREPEKERGDPERQRE). The segment covering 413 to 429 (MEEEEDEDEDEDEDEDE) has biased composition (acidic residues). Residues 430–452 (RQLLGEFEKELEGILLPSDRDRL) show a composition bias toward basic and acidic residues. A compositionally biased stretch (basic and acidic residues) spans 504-513 (LEEKQSPELV). Positions 514–523 (KKHKKKRVVP) are enriched in basic residues. Positions 633–647 (AQKERQRQKELESNY) are enriched in basic and acidic residues.

This sequence belongs to the OS-9 family. In terms of assembly, component of the HRD1 complex, which comprises at least SYNV1/HRD1, DERL1/2, FAM8A1, HERPUD1/HERP, OS9, SEL1L and UBE2J1. FAM8A1 is stabilized by interaction with SYNV1, which prevents its proteasomal degradation. OS9 and UBE2J1 recruitment to the complex may be mediated by SEL1L. Through this complex, may interact with ERLEC1 and HSPA5. Interacts (via C-terminus) with CPNE6 (via second C2 domain); this interaction occurs in a calcium-dependent manner in vitro. Interacts with CREB3. Post-translationally, intramolecular disulfide bonds. In terms of processing, isoform 1 and isoform 2 are N-glycosylated. As to expression, ubiquitously expressed. Found as well in all tumor cell lines analyzed, amplified in sarcomas. Highly expressed in osteosarcoma SJSA-1 and rhabdomyosarcoma Rh30 cell lines. Isoform 2 is the major isoform detected in all cell types examined.

It is found in the endoplasmic reticulum lumen. Its function is as follows. Lectin component of the HRD1 complex, which functions in endoplasmic reticulum (ER) quality control and ER-associated degradation (ERAD). Specifically recognizes and binds improperly folded glycoproteins as well as hyperglycosylated proteins, retain them in the ER, and transfers them to the ubiquitination machinery and promote their degradation. Possible targets include TRPV4 as well as hyperglycosylated HSP90B1. The chain is Protein OS-9 (OS9) from Homo sapiens (Human).